We begin with the raw amino-acid sequence, 279 residues long: High choriolytic enzyme 2 (279 aa).

An N-terminal signal peptide occupies residues 1–20 (MNLASSACLLLLFLLGIAQA). The propeptide at 21 to 79 (LPVQNEEGHEEGNKEGHGEEGVEEGDEDDFVDFTTRILTSNNNTDQLLLEGDLVAPTNR) is activation peptide. Over residues 26–40 (EEGHEEGNKEGHGEE) the composition is skewed to basic and acidic residues. The tract at residues 26-46 (EEGHEEGNKEGHGEEGVEEGD) is disordered. Asn62 carries N-linked (GlcNAc...) asparagine glycosylation. Residues 80–279 (NAMKCWYNSC…TRSNVLYNCR (200 aa)) form the Peptidase M12A domain. 3 cysteine pairs are disulfide-bonded: Cys84/Cys89, Cys129/Cys278, and Cys150/Cys170. Zn(2+) is bound at residue His178. The active site involves Glu179. Zn(2+) contacts are provided by His182 and His188.

Requires Zn(2+) as cofactor.

It localises to the zymogen granule. The catalysed reaction is Hydrolysis of the inner layer of fish egg envelope. Also hydrolysis of casein and small molecule substrates such as succinyl-Leu-Leu-Val-Tyr-|-7-(4-methyl)coumarylamide.. In terms of biological role, participates in the breakdown of the egg envelope, which is derived from the egg extracellular matrix, at the time of hatching. Thus allowing the newly hatched fish to swim free. HCE binds tightly to the egg envelope while it exerts the choriolytic swelling action. The protein is High choriolytic enzyme 2 (hceb) of Oryzias latipes (Japanese rice fish).